We begin with the raw amino-acid sequence, 157 residues long: DNA gyrase inhibitor (157 aa).

This sequence belongs to the DNA gyrase inhibitor family. In terms of assembly, interacts with DNA gyrase.

The protein localises to the cytoplasm. In terms of biological role, inhibits the supercoiling activity of DNA gyrase. Acts by inhibiting DNA gyrase at an early step, prior to (or at the step of) binding of DNA by the gyrase. It protects cells against toxins that target DNA gyrase, by inhibiting activity of these toxins and reducing the formation of lethal double-strand breaks in the cell. The protein is DNA gyrase inhibitor of Citrobacter rodentium (strain ICC168) (Citrobacter freundii biotype 4280).